The chain runs to 83 residues: ATP synthase subunit c (83 aa).

A run of 2 helical transmembrane segments spans residues 10–30 (IAVA…FGLL) and 52–72 (MFIV…IALF).

The protein belongs to the ATPase C chain family. F-type ATPases have 2 components, F(1) - the catalytic core - and F(0) - the membrane proton channel. F(1) has five subunits: alpha(3), beta(3), gamma(1), delta(1), epsilon(1). F(0) has three main subunits: a(1), b(2) and c(10-14). The alpha and beta chains form an alternating ring which encloses part of the gamma chain. F(1) is attached to F(0) by a central stalk formed by the gamma and epsilon chains, while a peripheral stalk is formed by the delta and b chains.

It is found in the cell inner membrane. Functionally, f(1)F(0) ATP synthase produces ATP from ADP in the presence of a proton or sodium gradient. F-type ATPases consist of two structural domains, F(1) containing the extramembraneous catalytic core and F(0) containing the membrane proton channel, linked together by a central stalk and a peripheral stalk. During catalysis, ATP synthesis in the catalytic domain of F(1) is coupled via a rotary mechanism of the central stalk subunits to proton translocation. Its function is as follows. Key component of the F(0) channel; it plays a direct role in translocation across the membrane. A homomeric c-ring of between 10-14 subunits forms the central stalk rotor element with the F(1) delta and epsilon subunits. This is ATP synthase subunit c from Shewanella loihica (strain ATCC BAA-1088 / PV-4).